The chain runs to 186 residues: dCTP deaminase (186 aa).

107 to 112 (KSTYAR) is a binding site for dCTP. Catalysis depends on E133, which acts as the Proton donor/acceptor. Q152, Y166, and Q176 together coordinate dCTP.

This sequence belongs to the dCTP deaminase family. As to quaternary structure, homotrimer.

The catalysed reaction is dCTP + H2O + H(+) = dUTP + NH4(+). It functions in the pathway pyrimidine metabolism; dUMP biosynthesis; dUMP from dCTP (dUTP route): step 1/2. Its function is as follows. Catalyzes the deamination of dCTP to dUTP. This is dCTP deaminase from Campylobacter lari (strain RM2100 / D67 / ATCC BAA-1060).